The chain runs to 618 residues: Leucine aminopeptidase 2 (618 aa).

Residues Gln-140–Gln-142 and Pro-272–Glu-277 each bind a peptide. A Zn(2+)-binding site is contributed by His-301. Glu-302 functions as the Proton acceptor in the catalytic mechanism. Residues His-305 and Glu-324 each contribute to the Zn(2+) site. The active-site Proton donor is Tyr-389.

Belongs to the peptidase M1 family. The cofactor is Zn(2+).

It is found in the cytoplasm. The protein localises to the nucleus. The enzyme catalyses an epoxide + H2O = an ethanediol. In terms of biological role, aminopeptidase that preferentially cleaves di- and tripeptides. Also has low epoxide hydrolase activity (in vitro). Can hydrolyze the epoxide leukotriene LTA(4) but it forms preferentially 5,6-dihydroxy-7,9,11,14-eicosatetraenoic acid rather than the cytokine leukotriene B(4) as the product compared to the homologous mammalian enzyme (in vitro). The polypeptide is Leucine aminopeptidase 2 (Emericella nidulans (strain FGSC A4 / ATCC 38163 / CBS 112.46 / NRRL 194 / M139) (Aspergillus nidulans)).